The chain runs to 107 residues: Heme-degrading monooxygenase (107 aa).

One can recognise an ABM domain in the interval 2–94 (IIVTNTAKIT…YILDNKISYY (93 aa)). Position 6 (Asn6) interacts with Fe cation. His76 serves as a coordination point for heme.

The protein belongs to the antibiotic biosynthesis monooxygenase family. Heme-degrading monooxygenase IsdG subfamily. As to quaternary structure, homodimer.

The protein resides in the cytoplasm. The enzyme catalyses heme b + 3 reduced [NADPH--hemoprotein reductase] + 3 O2 = biliverdin IXalpha + CO + Fe(2+) + 3 oxidized [NADPH--hemoprotein reductase] + 3 H2O + H(+). Functionally, allows bacterial pathogens to use the host heme as an iron source. Catalyzes the oxidative degradation of the heme macrocyclic porphyrin ring to the biliverdin in the presence of a suitable electron donor such as ascorbate or NADPH--cytochrome P450 reductase, with subsequent release of free iron. The chain is Heme-degrading monooxygenase from Bacillus cereus (strain AH187).